We begin with the raw amino-acid sequence, 301 residues long: uncharacterized protein (301 aa).

This sequence belongs to the asfivirus E301R family. Interacts with host IRF3.

Functionally, plays a role in the inhibition of host innate immune system by acting as a negatively regulator of type I interferon production. Mechanistically, interacts with and prevents host IRF3 nuclear localization to inhibit its transcriptional activity. This is an uncharacterized protein from African swine fever virus (strain Badajoz 1971 Vero-adapted) (Ba71V).